The sequence spans 245 residues: Chromosome partition protein MukE (245 aa).

The tract at residues 213–245 (PESIAAEKATADDESAVSNEEDFEYDDNQEGAE) is disordered. The segment covering 224-245 (DDESAVSNEEDFEYDDNQEGAE) has biased composition (acidic residues).

This sequence belongs to the MukE family. As to quaternary structure, interacts, and probably forms a ternary complex, with MukF and MukB. The complex formation is stimulated by calcium or magnesium.

The protein localises to the cytoplasm. The protein resides in the nucleoid. In terms of biological role, involved in chromosome condensation, segregation and cell cycle progression. May participate in facilitating chromosome segregation by condensation DNA from both sides of a centrally located replisome during cell division. Probably acts via its interaction with MukB and MukF. This Actinobacillus succinogenes (strain ATCC 55618 / DSM 22257 / CCUG 43843 / 130Z) protein is Chromosome partition protein MukE.